The chain runs to 307 residues: Ribonuclease Z (307 aa).

Zn(2+)-binding residues include His63, His65, Asp67, His68, His143, Asp213, and His271. Asp67 acts as the Proton acceptor in catalysis.

Belongs to the RNase Z family. Homodimer. Zn(2+) is required as a cofactor.

It catalyses the reaction Endonucleolytic cleavage of RNA, removing extra 3' nucleotides from tRNA precursor, generating 3' termini of tRNAs. A 3'-hydroxy group is left at the tRNA terminus and a 5'-phosphoryl group is left at the trailer molecule.. Functionally, zinc phosphodiesterase, which displays some tRNA 3'-processing endonuclease activity. Probably involved in tRNA maturation, by removing a 3'-trailer from precursor tRNA. This is Ribonuclease Z from Lactococcus lactis subsp. cremoris (strain MG1363).